Consider the following 374-residue polypeptide: Autophagy-related protein 18e (374 aa).

WD repeat units lie at residues 28–66 (KSDL…KKSI), 72–117 (ESGF…CLSE), 202–242 (AHDS…LLQE), and 247–286 (VERA…LSFD).

This sequence belongs to the WD repeat PROPPIN family. As to quaternary structure, component of the PI(3,5)P2 regulatory complex at least composed of ATG18, SAC/FIG4, FAB1 and VAC14.

It is found in the preautophagosomal structure membrane. Its subcellular location is the vacuole membrane. In terms of biological role, the PI(3,5)P2 regulatory complex regulates both the synthesis and turnover of phosphatidylinositol 3,5-bisphosphate (PtdIns(3,5)P2). Required for autophagy. This is Autophagy-related protein 18e (ATG18E) from Arabidopsis thaliana (Mouse-ear cress).